The primary structure comprises 223 residues: Guanylate kinase (223 aa).

The disordered stretch occupies residues 1–22 (MTADGGPDVRHGTRPEPSGDGR). Over residues 7-19 (PDVRHGTRPEPSG) the composition is skewed to basic and acidic residues. The Guanylate kinase-like domain occupies 21 to 201 (GRVVVLSGPS…ACAELVSLLV (181 aa)). 28–35 (GPSAVGKS) contributes to the ATP binding site. The interval 204–223 (APDRHDTSGRTGRQTTSHPD) is disordered. Polar residues predominate over residues 212–223 (GRTGRQTTSHPD).

It belongs to the guanylate kinase family.

Its subcellular location is the cytoplasm. It carries out the reaction GMP + ATP = GDP + ADP. In terms of biological role, essential for recycling GMP and indirectly, cGMP. This Mycolicibacterium paratuberculosis (strain ATCC BAA-968 / K-10) (Mycobacterium paratuberculosis) protein is Guanylate kinase.